The sequence spans 218 residues: Protein N-lysine methyltransferase METTL21A (218 aa).

S-adenosyl-L-methionine is bound by residues Trp47, 73 to 75 (GAG), Asp94, Trp125, and Ala143.

The protein belongs to the methyltransferase superfamily. METTL21 family. As to quaternary structure, interacts with heat shock 70 family members; at least some of these proteins are methylation substrates.

Its subcellular location is the cytoplasm. It carries out the reaction L-lysyl-[protein] + 3 S-adenosyl-L-methionine = N(6),N(6),N(6)-trimethyl-L-lysyl-[protein] + 3 S-adenosyl-L-homocysteine + 3 H(+). In terms of biological role, protein-lysine methyltransferase that selectively trimethylates residues in heat shock protein 70 (HSP70) family members. Contributes to the in vivo trimethylation of Lys residues in HSPA1 and HSPA8. In vitro methylates 'Lys-561' in HSPA1, 'Lys-564' in HSPA2, 'Lys-585' in HSPA5, 'Lys-563' in HSPA6 and 'Lys-561' in HSPA8. In Bos taurus (Bovine), this protein is Protein N-lysine methyltransferase METTL21A (METTL21A).